Reading from the N-terminus, the 405-residue chain is Probable succinyl-diaminopimelate desuccinylase (405 aa).

H72 provides a ligand contact to Zn(2+). The active site involves D74. D105 contacts Zn(2+). Catalysis depends on E139, which acts as the Proton acceptor. The Zn(2+) site is built by E140, E165, and H377.

It belongs to the peptidase M20A family. Zn(2+) serves as cofactor. It depends on Co(2+) as a cofactor.

The enzyme catalyses N-succinyl-(2S,6S)-2,6-diaminopimelate + H2O = (2S,6S)-2,6-diaminopimelate + succinate. The protein operates within amino-acid biosynthesis; L-lysine biosynthesis via DAP pathway; LL-2,6-diaminopimelate from (S)-tetrahydrodipicolinate (succinylase route): step 3/3. The chain is Probable succinyl-diaminopimelate desuccinylase (dapE) from Staphylococcus epidermidis (strain ATCC 12228 / FDA PCI 1200).